A 249-amino-acid chain; its full sequence is Small ribosomal subunit protein uS3 (249 aa).

The KH type-2 domain maps to 38-106 (IRDFLSKGLE…QVQLNILEVK (69 aa)). The segment covering 218–233 (ARDDRGSRRGRNDRPR) has biased composition (basic and acidic residues). Residues 218–249 (ARDDRGSRRGRNDRPRRGGGRRRRAAEQKQEG) form a disordered region.

Belongs to the universal ribosomal protein uS3 family. As to quaternary structure, part of the 30S ribosomal subunit. Forms a tight complex with proteins S10 and S14.

In terms of biological role, binds the lower part of the 30S subunit head. Binds mRNA in the 70S ribosome, positioning it for translation. This chain is Small ribosomal subunit protein uS3, found in Corynebacterium kroppenstedtii (strain DSM 44385 / JCM 11950 / CIP 105744 / CCUG 35717).